The primary structure comprises 418 residues: L-rhamnose isomerase (418 aa).

Positions 262, 294, and 296 each coordinate Mn(2+).

This sequence belongs to the rhamnose isomerase family. Homotetramer. Requires Mn(2+) as cofactor.

The protein localises to the cytoplasm. The enzyme catalyses L-rhamnopyranose = L-rhamnulose. Its pathway is carbohydrate degradation; L-rhamnose degradation; glycerone phosphate from L-rhamnose: step 1/3. In terms of biological role, catalyzes the interconversion of L-rhamnose and L-rhamnulose. The protein is L-rhamnose isomerase of Yersinia pestis bv. Antiqua (strain Antiqua).